Here is a 152-residue protein sequence, read N- to C-terminus: Superoxide dismutase [Cu-Zn] (152 aa).

Cu cation contacts are provided by His45, His47, and His62. Cys56 and Cys145 are disulfide-bonded. His62, His70, His79, and Asp82 together coordinate Zn(2+). Position 119 (His119) interacts with Cu cation.

The protein belongs to the Cu-Zn superoxide dismutase family. Homodimer. Requires Cu cation as cofactor. Zn(2+) is required as a cofactor.

It is found in the cytoplasm. It catalyses the reaction 2 superoxide + 2 H(+) = H2O2 + O2. In terms of biological role, destroys radicals which are normally produced within the cells and which are toxic to biological systems. The chain is Superoxide dismutase [Cu-Zn] (SODCC) from Panax ginseng (Korean ginseng).